The sequence spans 1054 residues: Bifunctional cytochrome P450/NADPH--P450 reductase 2 (1054 aa).

The segment at 1 to 475 (MKQASAIPQP…QADIKAETKP (475 aa)) is cytochrome P450. Cys-403 serves as a coordination point for heme. Over residues 462–480 (QRKEQADIKAETKPKETKP) the composition is skewed to basic and acidic residues. The segment at 462 to 482 (QRKEQADIKAETKPKETKPKH) is disordered. Residues 476-1053 (KETKPKHGTP…RRYVKDVWTG (578 aa)) are NADPH--P450 reductase. The Flavodoxin-like domain maps to 486–625 (LLVLFGSNLG…HRESWENRFW (140 aa)). FMN is bound by residues 492 to 497 (SNLGTA), 539 to 542 (SYNG), 573 to 575 (CGN), and 581 to 583 (TYQ). Residues 663-896 (YGAFEGIVLE…RTPQSGFQMP (234 aa)) form the FAD-binding FR-type domain.

It in the N-terminal section; belongs to the cytochrome P450 family. Requires FAD as cofactor. FMN serves as cofactor. It depends on heme b as a cofactor.

It is found in the cytoplasm. It carries out the reaction an organic molecule + reduced [NADPH--hemoprotein reductase] + O2 = an alcohol + oxidized [NADPH--hemoprotein reductase] + H2O + H(+). It catalyses the reaction 2 oxidized [cytochrome P450] + NADPH = 2 reduced [cytochrome P450] + NADP(+) + H(+). Functions as a fatty acid monooxygenase. Catalyzes hydroxylation of a range of medium to long-chain fatty acids, with a preference for long-chain unsaturated and branched-chain fatty acids over saturated fatty acids. Hydroxylation of myristic acid occurs mainly at the omega-2 and omega-3 positions, in approximately equal proportions. Also displays a NADPH-dependent reductase activity in the C-terminal domain, which allows electron transfer from NADPH to the heme iron of the cytochrome P450 N-terminal domain. This Bacillus subtilis (strain 168) protein is Bifunctional cytochrome P450/NADPH--P450 reductase 2.